The following is a 175-amino-acid chain: ATP synthase subunit b (175 aa).

A helical transmembrane segment spans residues 22–44; that stretch reads MLVQLFFFLILLALLKKFAWGPL.

This sequence belongs to the ATPase B chain family. As to quaternary structure, F-type ATPases have 2 components, F(1) - the catalytic core - and F(0) - the membrane proton channel. F(1) has five subunits: alpha(3), beta(3), gamma(1), delta(1), epsilon(1). F(0) has three main subunits: a(1), b(2) and c(10-14). The alpha and beta chains form an alternating ring which encloses part of the gamma chain. F(1) is attached to F(0) by a central stalk formed by the gamma and epsilon chains, while a peripheral stalk is formed by the delta and b chains.

The protein localises to the cell membrane. Its function is as follows. F(1)F(0) ATP synthase produces ATP from ADP in the presence of a proton or sodium gradient. F-type ATPases consist of two structural domains, F(1) containing the extramembraneous catalytic core and F(0) containing the membrane proton channel, linked together by a central stalk and a peripheral stalk. During catalysis, ATP synthesis in the catalytic domain of F(1) is coupled via a rotary mechanism of the central stalk subunits to proton translocation. Component of the F(0) channel, it forms part of the peripheral stalk, linking F(1) to F(0). This is ATP synthase subunit b from Oceanobacillus iheyensis (strain DSM 14371 / CIP 107618 / JCM 11309 / KCTC 3954 / HTE831).